A 413-amino-acid polypeptide reads, in one-letter code: 1-deoxy-D-xylulose 5-phosphate reductoisomerase (413 aa).

NADPH is bound by residues T13, G14, S15, I16, R40, N41, and N127. K128 contributes to the 1-deoxy-D-xylulose 5-phosphate binding site. E129 contacts NADPH. Residue D153 participates in Mn(2+) binding. Residues S154, E155, S184, and H207 each contribute to the 1-deoxy-D-xylulose 5-phosphate site. E155 is a Mn(2+) binding site. Position 213 (G213) interacts with NADPH. Residues S220, N225, K226, and E229 each coordinate 1-deoxy-D-xylulose 5-phosphate. E229 serves as a coordination point for Mn(2+).

The protein belongs to the DXR family. Mg(2+) is required as a cofactor. It depends on Mn(2+) as a cofactor.

The catalysed reaction is 2-C-methyl-D-erythritol 4-phosphate + NADP(+) = 1-deoxy-D-xylulose 5-phosphate + NADPH + H(+). Its pathway is isoprenoid biosynthesis; isopentenyl diphosphate biosynthesis via DXP pathway; isopentenyl diphosphate from 1-deoxy-D-xylulose 5-phosphate: step 1/6. Functionally, catalyzes the NADPH-dependent rearrangement and reduction of 1-deoxy-D-xylulose-5-phosphate (DXP) to 2-C-methyl-D-erythritol 4-phosphate (MEP). This chain is 1-deoxy-D-xylulose 5-phosphate reductoisomerase, found in Nitrosomonas europaea (strain ATCC 19718 / CIP 103999 / KCTC 2705 / NBRC 14298).